The sequence spans 328 residues: Purple acid phosphatase 7 (328 aa).

Positions Met1 to Ser24 are cleaved as a signal peptide. Asp48 lines the Fe cation pocket. The N-linked (GlcNAc...) asparagine glycan is linked to Asn56. 2 residues coordinate Fe cation: Asp81 and Tyr84. Asp81 contributes to the Zn(2+) binding site. Zn(2+) contacts are provided by Asn119 and His213. Catalysis depends on His222, which acts as the Proton donor. Residue His248 coordinates Zn(2+). Substrate is bound at residue His248–His250. A Fe cation-binding site is contributed by His250.

This sequence belongs to the metallophosphoesterase superfamily. Purple acid phosphatase family. Homodimer. It depends on Fe cation as a cofactor. Zn(2+) is required as a cofactor. As to expression, expressed in roots, stems, leaves, flowers and siliques.

The protein localises to the secreted. The catalysed reaction is a phosphate monoester + H2O = an alcohol + phosphate. The sequence is that of Purple acid phosphatase 7 (PAP7) from Arabidopsis thaliana (Mouse-ear cress).